A 326-amino-acid polypeptide reads, in one-letter code: Peroxidase 41 (326 aa).

Positions Met-1–Ser-20 are cleaved as a signal peptide. N-linked (GlcNAc...) asparagine glycosylation is present at Asn-25. 4 cysteine pairs are disulfide-bonded: Cys-35–Cys-116, Cys-68–Cys-73, Cys-122–Cys-318, and Cys-201–Cys-228. The Proton acceptor role is filled by His-66. Asp-67, Gly-72, Asp-74, and Ser-76 together coordinate Ca(2+). Pro-164 contacts substrate. Residue Asn-167 is glycosylated (N-linked (GlcNAc...) asparagine). His-194 serves as a coordination point for heme b. Thr-195 provides a ligand contact to Ca(2+). Asn-234 carries N-linked (GlcNAc...) asparagine glycosylation. Residues Asp-242, Thr-245, and Asp-250 each coordinate Ca(2+). A glycan (N-linked (GlcNAc...) asparagine) is linked at Asn-286.

Belongs to the peroxidase family. Classical plant (class III) peroxidase subfamily. The cofactor is heme b. It depends on Ca(2+) as a cofactor.

The protein resides in the secreted. The catalysed reaction is 2 a phenolic donor + H2O2 = 2 a phenolic radical donor + 2 H2O. Removal of H(2)O(2), oxidation of toxic reductants, biosynthesis and degradation of lignin, suberization, auxin catabolism, response to environmental stresses such as wounding, pathogen attack and oxidative stress. These functions might be dependent on each isozyme/isoform in each plant tissue. The sequence is that of Peroxidase 41 (PER41) from Arabidopsis thaliana (Mouse-ear cress).